The following is a 1159-amino-acid chain: ATP-dependent helicase/deoxyribonuclease subunit B (1159 aa).

Residue 8-15 (GRAGSGKT) coordinates ATP. Residues Cys-784, Cys-1102, Cys-1105, and Cys-1111 each coordinate [4Fe-4S] cluster. A disordered region spans residues 1140-1159 (VKEDGSQVDGRTEGSDNNEG).

Belongs to the helicase family. AddB/RexB type 1 subfamily. In terms of assembly, heterodimer of AddA and AddB. It depends on Mg(2+) as a cofactor. Requires [4Fe-4S] cluster as cofactor.

Functionally, the heterodimer acts as both an ATP-dependent DNA helicase and an ATP-dependent, dual-direction single-stranded exonuclease. Recognizes the chi site generating a DNA molecule suitable for the initiation of homologous recombination. The AddB subunit has 5' -&gt; 3' nuclease activity but not helicase activity. The protein is ATP-dependent helicase/deoxyribonuclease subunit B of Caldanaerobacter subterraneus subsp. tengcongensis (strain DSM 15242 / JCM 11007 / NBRC 100824 / MB4) (Thermoanaerobacter tengcongensis).